A 745-amino-acid chain; its full sequence is uncharacterized protein (745 aa).

The HTH araC/xylS-type domain maps to 158-256 (NQVCDYIELH…HQTPKQYRGD (99 aa)). 2 DNA-binding regions (H-T-H motif) span residues 175–196 (SELS…TESL) and 223–246 (ITDI…KHFT).

This is an uncharacterized protein from Staphylococcus aureus (strain Mu50 / ATCC 700699).